The primary structure comprises 187 residues: Putative glutathione-dependent formaldehyde-activating enzyme (187 aa).

The region spanning 20 to 166 (FQGGVLKCKC…FESLGLESYD (147 aa)) is the CENP-V/GFA domain. Zn(2+)-binding residues include C27, C29, C48, C50, C53, C95, and C98.

Belongs to the Gfa family. The cofactor is Zn(2+).

The catalysed reaction is S-(hydroxymethyl)glutathione = glutathione + formaldehyde. It participates in one-carbon metabolism; formaldehyde degradation; formate from formaldehyde (glutathione route): step 1/3. Catalyzes the condensation of formaldehyde and glutathione to S-hydroxymethylglutathione. The polypeptide is Putative glutathione-dependent formaldehyde-activating enzyme (Verticillium alfalfae (strain VaMs.102 / ATCC MYA-4576 / FGSC 10136) (Verticillium wilt of alfalfa)).